Here is an 842-residue protein sequence, read N- to C-terminus: Elongation factor 2 (842 aa).

The 237-residue stretch at 17–253 (TNVRNMSVIA…LWGDSYFNPK (237 aa)) folds into the tr-type G domain. GTP contacts are provided by residues 26-33 (AHVDHGKS), 158-161 (NKVD), and 213-215 (SGL). A Diphthamide modification is found at histidine 699.

This sequence belongs to the TRAFAC class translation factor GTPase superfamily. Classic translation factor GTPase family. EF-G/EF-2 subfamily.

It localises to the cytoplasm. It catalyses the reaction GTP + H2O = GDP + phosphate + H(+). Functionally, catalyzes the GTP-dependent ribosomal translocation step during translation elongation. During this step, the ribosome changes from the pre-translocational (PRE) to the post-translocational (POST) state as the newly formed A-site-bound peptidyl-tRNA and P-site-bound deacylated tRNA move to the P and E sites, respectively. Catalyzes the coordinated movement of the two tRNA molecules, the mRNA and conformational changes in the ribosome. The chain is Elongation factor 2 (EFT1) from Komagataella pastoris (Yeast).